The following is a 216-amino-acid chain: GTP cyclohydrolase 1 (216 aa).

3 residues coordinate Zn(2+): Cys-108, His-111, and Cys-179.

The protein belongs to the GTP cyclohydrolase I family. Toroid-shaped homodecamer, composed of two pentamers of five dimers.

The catalysed reaction is GTP + H2O = 7,8-dihydroneopterin 3'-triphosphate + formate + H(+). It functions in the pathway cofactor biosynthesis; 7,8-dihydroneopterin triphosphate biosynthesis; 7,8-dihydroneopterin triphosphate from GTP: step 1/1. This is GTP cyclohydrolase 1 from Shewanella oneidensis (strain ATCC 700550 / JCM 31522 / CIP 106686 / LMG 19005 / NCIMB 14063 / MR-1).